Here is a 229-residue protein sequence, read N- to C-terminus: Large ribosomal subunit protein uL1 (229 aa).

It belongs to the universal ribosomal protein uL1 family. Part of the 50S ribosomal subunit.

Binds directly to 23S rRNA. The L1 stalk is quite mobile in the ribosome, and is involved in E site tRNA release. In terms of biological role, protein L1 is also a translational repressor protein, it controls the translation of the L11 operon by binding to its mRNA. The chain is Large ribosomal subunit protein uL1 from Desulforamulus reducens (strain ATCC BAA-1160 / DSM 100696 / MI-1) (Desulfotomaculum reducens).